A 694-amino-acid chain; its full sequence is Glycine--tRNA ligase beta subunit (694 aa).

Belongs to the class-II aminoacyl-tRNA synthetase family. In terms of assembly, tetramer of two alpha and two beta subunits.

It is found in the cytoplasm. It catalyses the reaction tRNA(Gly) + glycine + ATP = glycyl-tRNA(Gly) + AMP + diphosphate. This chain is Glycine--tRNA ligase beta subunit, found in Shewanella denitrificans (strain OS217 / ATCC BAA-1090 / DSM 15013).